The primary structure comprises 340 residues: Adenosine deaminase (340 aa).

Histidine 15 and histidine 17 together coordinate Zn(2+). Substrate contacts are provided by histidine 17, aspartate 19, and glycine 172. Residue histidine 199 coordinates Zn(2+). Residue glutamate 202 is the Proton donor of the active site. Aspartate 279 is a binding site for Zn(2+).

The protein belongs to the metallo-dependent hydrolases superfamily. Adenosine and AMP deaminases family. Adenosine deaminase subfamily. Zn(2+) is required as a cofactor.

It catalyses the reaction adenosine + H2O + H(+) = inosine + NH4(+). It carries out the reaction 2'-deoxyadenosine + H2O + H(+) = 2'-deoxyinosine + NH4(+). Catalyzes the hydrolytic deamination of adenosine and 2-deoxyadenosine. This chain is Adenosine deaminase, found in Streptococcus agalactiae serotype Ia (strain ATCC 27591 / A909 / CDC SS700).